A 543-amino-acid chain; its full sequence is CTP synthase (543 aa).

The tract at residues 1–265 (MTKFIFVTGG…DRLVTDRFRI (265 aa)) is amidoligase domain. Residue serine 13 participates in CTP binding. Serine 13 is a UTP binding site. ATP contacts are provided by residues 14 to 19 (SLGKGI) and aspartate 71. 2 residues coordinate Mg(2+): aspartate 71 and glutamate 139. CTP contacts are provided by residues 146–148 (DIE), 186–191 (KTKPTQ), and lysine 222. Residues 186 to 191 (KTKPTQ) and lysine 222 each bind UTP. The 252-residue stretch at 290 to 541 (EIAMVGKYVD…VEAASQHKQT (252 aa)) folds into the Glutamine amidotransferase type-1 domain. Position 351 (glycine 351) interacts with L-glutamine. The active-site Nucleophile; for glutamine hydrolysis is cysteine 378. L-glutamine is bound by residues 379 to 382 (LGMQ), glutamate 402, and arginine 469. Catalysis depends on residues histidine 514 and glutamate 516.

It belongs to the CTP synthase family. As to quaternary structure, homotetramer.

The enzyme catalyses UTP + L-glutamine + ATP + H2O = CTP + L-glutamate + ADP + phosphate + 2 H(+). It catalyses the reaction L-glutamine + H2O = L-glutamate + NH4(+). The catalysed reaction is UTP + NH4(+) + ATP = CTP + ADP + phosphate + 2 H(+). It participates in pyrimidine metabolism; CTP biosynthesis via de novo pathway; CTP from UDP: step 2/2. Allosterically activated by GTP, when glutamine is the substrate; GTP has no effect on the reaction when ammonia is the substrate. The allosteric effector GTP functions by stabilizing the protein conformation that binds the tetrahedral intermediate(s) formed during glutamine hydrolysis. Inhibited by the product CTP, via allosteric rather than competitive inhibition. Functionally, catalyzes the ATP-dependent amination of UTP to CTP with either L-glutamine or ammonia as the source of nitrogen. Regulates intracellular CTP levels through interactions with the four ribonucleotide triphosphates. The polypeptide is CTP synthase (Hydrogenovibrio crunogenus (strain DSM 25203 / XCL-2) (Thiomicrospira crunogena)).